Here is a 331-residue protein sequence, read N- to C-terminus: tRNA (guanine-N(1)-)-methyltransferase (331 aa).

Composition is skewed to low complexity over residues Gly-77–Arg-99 and Ala-107–Ala-134. The disordered stretch occupies residues Gly-77–Arg-137. S-adenosyl-L-methionine-binding positions include Gly-169 and Leu-193–Leu-198. A disordered region spans residues Trp-312–Ala-331.

The protein belongs to the RNA methyltransferase TrmD family. In terms of assembly, homodimer.

It localises to the cytoplasm. It carries out the reaction guanosine(37) in tRNA + S-adenosyl-L-methionine = N(1)-methylguanosine(37) in tRNA + S-adenosyl-L-homocysteine + H(+). Its function is as follows. Specifically methylates guanosine-37 in various tRNAs. This is tRNA (guanine-N(1)-)-methyltransferase from Kocuria rhizophila (strain ATCC 9341 / DSM 348 / NBRC 103217 / DC2201).